The chain runs to 355 residues: Phosphoserine aminotransferase (355 aa).

L-glutamate is bound at residue Arg41. Pyridoxal 5'-phosphate contacts are provided by residues 75 to 76 (AS), Trp99, Thr147, Asp166, and Gln189. Lys190 bears the N6-(pyridoxal phosphate)lysine mark. Residue 231-232 (NT) participates in pyridoxal 5'-phosphate binding.

It belongs to the class-V pyridoxal-phosphate-dependent aminotransferase family. SerC subfamily. As to quaternary structure, homodimer. It depends on pyridoxal 5'-phosphate as a cofactor.

It is found in the cytoplasm. It carries out the reaction O-phospho-L-serine + 2-oxoglutarate = 3-phosphooxypyruvate + L-glutamate. It catalyses the reaction 4-(phosphooxy)-L-threonine + 2-oxoglutarate = (R)-3-hydroxy-2-oxo-4-phosphooxybutanoate + L-glutamate. Its pathway is amino-acid biosynthesis; L-serine biosynthesis; L-serine from 3-phospho-D-glycerate: step 2/3. It functions in the pathway cofactor biosynthesis; pyridoxine 5'-phosphate biosynthesis; pyridoxine 5'-phosphate from D-erythrose 4-phosphate: step 3/5. In terms of biological role, catalyzes the reversible conversion of 3-phosphohydroxypyruvate to phosphoserine and of 3-hydroxy-2-oxo-4-phosphonooxybutanoate to phosphohydroxythreonine. This Bacteroides thetaiotaomicron (strain ATCC 29148 / DSM 2079 / JCM 5827 / CCUG 10774 / NCTC 10582 / VPI-5482 / E50) protein is Phosphoserine aminotransferase.